A 126-amino-acid chain; its full sequence is uncharacterized protein (126 aa).

3 helical membrane-spanning segments follow: residues 4–24, 42–62, and 64–84; these read LIIAGILLLIKAMIFCIVNIL, AITIISSSVLYFLLSYYIINP, and ISASIIFDDCFSIFMLSSYTV.

It localises to the membrane. This is an uncharacterized protein from Saccharomyces cerevisiae (strain ATCC 204508 / S288c) (Baker's yeast).